Consider the following 319-residue polypeptide: Transcription factor jun-1 (319 aa).

Disordered stretches follow at residues 1–52 (MEED…EKES) and 216–264 (NGVN…CRQK). The span at 8-19 (PPSSSTSSESPE) shows a compositional bias: low complexity. Residues 28 to 38 (PTRRRKNSKKD) are compositionally biased toward basic residues. The interval 244–285 (KKKLERKRARNRQAATKCRQKKMDRIKELEEQVLHEKHRGQR) is basic motif. Positions 244-307 (KKKLERKRAR…EHFRRTVEHH (64 aa)) constitute a bZIP domain. The tract at residues 286-293 (LDAELLEL) is leucine-zipper.

The protein belongs to the bZIP family. Jun subfamily. Heterodimer; with fos-1. Isoform a, isoform b, isoform c and isoform d are expressed in the spermatheca.

The protein resides in the nucleus. Its function is as follows. Transcription factor that recognizes and binds to the AP-1 non-canonical enhancer heptamer motif 5'-TTAGTCA-3'. Required for ovulation. Controls plc-1 expression in the spermatheca to regulate spermathecal valve dilation. This Caenorhabditis elegans protein is Transcription factor jun-1.